A 101-amino-acid chain; its full sequence is Ferredoxin-3 (101 aa).

4Fe-4S ferredoxin-type domains follow at residues 17 to 46 and 70 to 100; these read YLMKIDEQKCIGCGRCFKVCGRDVMSLHGL and KVMALTGAENCIGCGACARVCPSECQTHAAL. The [4Fe-4S] cluster site is built by Cys26, Cys29, Cys32, Cys36, Cys80, Cys83, Cys86, and Cys90.

In terms of assembly, homodimer. Requires [4Fe-4S] cluster as cofactor.

In terms of biological role, ferredoxins are iron-sulfur proteins that transfer electrons in a wide variety of metabolic reactions. In Rhodobacter capsulatus (Rhodopseudomonas capsulata), this protein is Ferredoxin-3 (fdxB).